The following is a 518-amino-acid chain: GMP synthase [glutamine-hydrolyzing] (518 aa).

One can recognise a Glutamine amidotransferase type-1 domain in the interval 13–203 (KIIVLDFGSQ…ALNVCGCKGD (191 aa)). Cys-90 acts as the Nucleophile in catalysis. Residues His-177 and Glu-179 contribute to the active site. The GMPS ATP-PPase domain maps to 204 to 393 (WTMENFSEVE…LGMPDAIVWR (190 aa)). 231–237 (SGGVDSS) lines the ATP pocket.

As to quaternary structure, homodimer.

The enzyme catalyses XMP + L-glutamine + ATP + H2O = GMP + L-glutamate + AMP + diphosphate + 2 H(+). It functions in the pathway purine metabolism; GMP biosynthesis; GMP from XMP (L-Gln route): step 1/1. Its function is as follows. Catalyzes the synthesis of GMP from XMP. The protein is GMP synthase [glutamine-hydrolyzing] of Listeria welshimeri serovar 6b (strain ATCC 35897 / DSM 20650 / CCUG 15529 / CIP 8149 / NCTC 11857 / SLCC 5334 / V8).